A 220-amino-acid chain; its full sequence is 3-keto-L-gulonate-6-phosphate decarboxylase SgbH (220 aa).

Substrate is bound at residue Asp11. Mg(2+)-binding residues include Glu33 and Asp62. Residue Arg192 participates in substrate binding.

The protein belongs to the HPS/KGPDC family. KGPDC subfamily. In terms of assembly, homodimer. Mg(2+) serves as cofactor.

The catalysed reaction is 3-dehydro-L-gulonate 6-phosphate + H(+) = L-xylulose 5-phosphate + CO2. Functionally, catalyzes the decarboxylation of 3-keto-L-gulonate-6-P into L-xylulose-5-P. May be involved in the utilization of 2,3-diketo-L-gulonate. In Escherichia coli (strain K12), this protein is 3-keto-L-gulonate-6-phosphate decarboxylase SgbH (sgbH).